A 568-amino-acid polypeptide reads, in one-letter code: MWRMTTLLHLTALLVLIPLCHCASMHRHDHYMDMDQTYPNGLGYCEPSGESSCKAGFSYNRDICQGPYHWHTISSCYKACGHKRRQSPINIWSHKAVFLPYLPRLKFKPHMKSLDTDVTNHQNRAPEFEPEDGDKLHVKLKNLVDGHYKFHNLHIHNGKSRRKGSEHSVNRHFTPMEAHLVFHHDDKKEIKPPRVKLGGVYAGRNKFVVVGVFLEVGDEGYGDEPDDDECKRILKGHCENNGDNGNNCDNGNNGNNDNNGNNGNNGNGNNGYNGNNGDNGNNGNGNGNNGYNGNNGYNGNNGNNGNGNNDNNGNDNNGNNGGNGNNGNNGNGNNGNNGNGNNGNNGGNGNNGNNGNSNNGNNGNGNNGNNGGNGNNGNNGNGNNENNGNGSNGNNGGNGNNGNNGDNGNGDNGYNGDNGNSDGRLRRWDLANVRRMHAERYHFSGGCIVKKAKRLSRILECAYRHKKVREFKRNGEEKGLDVDITPEMVLPPMKYRHYYTYEGSLTTPPCNETVLWVVEKCHVQVSRRVLDALRNVEGYEDGTTLSKYGTRRPTQRNKHPLRVYKNSI.

The N-terminal stretch at 1 to 22 (MWRMTTLLHLTALLVLIPLCHC) is a signal peptide. In terms of domain architecture, Alpha-carbonic anhydrase spans 55 to 567 (AGFSYNRDIC…KHPLRVYKNS (513 aa)). Zn(2+) contacts are provided by H154, H156, and H179. Residues 259 to 421 (NGNNGNNGNG…NGYNGDNGNS (163 aa)) are disordered. The span at 280-290 (GNNGNGNGNNG) shows a compositional bias: gly residues. A compositionally biased stretch (low complexity) spans 291–318 (YNGNNGYNGNNGNNGNGNNDNNGNDNNG). Gly residues-rich tracts occupy residues 319–352 (NNGG…GNNG) and 362–380 (NGNG…GNNG). The N-linked (GlcNAc...) asparagine glycan is linked to N389. Over residues 390–413 (GSNGNNGGNGNNGNNGDNGNGDNG) the composition is skewed to gly residues. A substrate-binding site is contributed by 506–507 (TT). N511 carries N-linked (GlcNAc...) asparagine glycosylation.

The protein belongs to the alpha-carbonic anhydrase family. In terms of assembly, homooligomer; disulfide-linked. May also be disulfide-linked to insoluble organic matrix. Requires Zn(2+) as cofactor. As to expression, expressed in both the dorsal region of the mantle and the mantle edge. Is dispersed in calcium carbonate and also linked by disulfide bonds to the organic core of nacre.

Its subcellular location is the secreted. It is found in the extracellular space. The protein resides in the extracellular matrix. It catalyses the reaction hydrogencarbonate + H(+) = CO2 + H2O. Its function is as follows. Acts as a negative regulator for calcification in the shells of mollusks. May function both as a calcium concentrator and as a carbonic anhydrase required for production of carbonate ions, which are assembled to CaCO(3) at mineralization sites. Is important for shell formation in both the calcitic prismatic layer and the aragonitic nacreous layer. In Pinctada maxima (Silver-lipped pearl oyster), this protein is N66 matrix protein.